Consider the following 94-residue polypeptide: Putative regulatory protein LEPBI_I0950 (94 aa).

This sequence belongs to the RemA family.

This is Putative regulatory protein LEPBI_I0950 from Leptospira biflexa serovar Patoc (strain Patoc 1 / ATCC 23582 / Paris).